A 50-amino-acid chain; its full sequence is Protein PndA (50 aa).

Residues 5–25 (TFLMMLIVICVTILCFVWMVR) form a helical membrane-spanning segment.

It belongs to the Hok/Gef family.

It localises to the cell inner membrane. In terms of biological role, toxic component of a type I toxin-antitoxin (TA) system. When expressed is involved in cellular Mg(2+) release and degradation of stable RNA. The sequence is that of Protein PndA (pndA) from Escherichia coli.